The sequence spans 374 residues: Phosphate-binding protein PstS 1 (374 aa).

The signal sequence occupies residues 1 to 23 (MKIRLHTLLAVLTAAPLLLAAAG). Cys-24 carries the N-palmitoyl cysteine lipid modification. Residue Cys-24 is the site of S-diacylglycerol cysteine attachment. The segment at 25-48 (GSKPPSGSPETGAGAGTVATTPAS) is disordered. Phosphate contacts are provided by residues 58–60 (STL), Ser-88, Asp-106, and 189–191 (SGD).

The protein belongs to the PstS family. The complex is composed of two ATP-binding proteins (PstB), two transmembrane proteins (PstC and PstA) and a solute-binding protein (PstS).

It localises to the cell membrane. Its function is as follows. Part of the ABC transporter complex PstSACB involved in phosphate import. The sequence is that of Phosphate-binding protein PstS 1 (pstS1) from Mycobacterium tuberculosis (strain CDC 1551 / Oshkosh).